Consider the following 477-residue polypeptide: Charged multivesicular body protein 7 (477 aa).

2 coiled-coil regions span residues 252–280 and 382–428; these read KLQT…TIKE and ESLS…QQQQ. Basic and acidic residues-rich tracts occupy residues 411–424 and 465–477; these read EEKQ…KEKQ and KQDE…SELI. The tract at residues 411–477 is disordered; sequence EEKQKQKQIE…ENKQKTSELI (67 aa).

It belongs to the SNF7 family.

It is found in the cytoplasm. Its function is as follows. Plays a role in the endosomal sorting pathway. The protein is Charged multivesicular body protein 7 (chmp7) of Dictyostelium discoideum (Social amoeba).